Reading from the N-terminus, the 797-residue chain is MIAFSLTMELSLPVFGVTQANKEEWDNIWKNFQQFPNVSRTLGLLRRFFLRNDLGFLSAVVILKQYVENLPTTKQKLNLIECTQGLKFLIRSLYEKIKDQCDVKSSIREIFYDCKARLLLLLEEGCGCGACCATSAALSKVGHLGRPPKLTPHKPHCSAQSALTCVHNHIILGMNPGMSEWMVLEIMFLPSDFYDFNEHKNEISLVATCINCCWLYFMLQQYMSSDLLAIEEALNKTYLALHPNDKASYSNILKFLTSNSHREHVTQKVNVKAFMQSSLYKIIKDTEKNPSPKTKMLMISILGSRGIGMDLFCSQSVLKAPLIDHKLSPVSEYEDFDEDEVELCISDDEVDSEDGNLCVLDDESESVNSVALRQVLTVDKQANEKEYKKIIDKSDDRDDRDKDEYELENEEYNRDEEEDEGEDEEDEKDEKEEGEDEGDDGEDEGEDEGEDEGDEGDEGDEGEDEGEDEDDEEDEGEDEGDEGDEGEDEGDEGDEGEDEGDEGDEGKDEGDEGDEGKDEGDEGDEGDEGDEGEDEWEDEGDEGEDEGDEGEDEGDEGEDEGEDEGDEGEDEGEDEGDEGEDEGEDEGDEGEDEGEDEGDEGEDEGEDEGDEGDEGEDEGDEGEDEGDEGEDEGDEGEDEGDEGEDEGDEGEDEGDEGEDEGDEGDEGEDEGDEGEDEGDEGEDEGDEGDEGDEGDEGDEGEDEGEDEGEDEGDEGTKDKEGNANKVVQNPFDYYNWLQKSTLSIVHNKSIHATEHMLEDQLQHSLTASFETHLYIKPFRNTKESQAATNFVYFREQV.

The span at 394 to 403 (SDDRDDRDKD) shows a compositional bias: basic and acidic residues. The tract at residues 394–724 (SDDRDDRDKD…GTKDKEGNAN (331 aa)) is disordered. Residues 404-713 (EYELENEEYN…GEDEGEDEGD (310 aa)) are compositionally biased toward acidic residues.

This sequence belongs to the herpesviridae BBRF2 family.

This is an uncharacterized protein from Saimiriine herpesvirus 2 (strain 11) (SaHV-2).